We begin with the raw amino-acid sequence, 485 residues long: Noelin (485 aa).

The signal sequence occupies residues 1-24; that stretch reads MSVPLLKIGVVLSTMAMITNWMSQ. N-linked (GlcNAc...) asparagine glycosylation is found at asparagine 33, asparagine 103, asparagine 187, asparagine 288, asparagine 307, asparagine 394, asparagine 431, and asparagine 473. Positions 87–225 form a coiled coil; the sequence is RDARTKQLRQ…ERLRACMQKL (139 aa). One can recognise an Olfactomedin-like domain in the interval 226-478; sequence ACGKLTGISD…QTLYNVTLFH (253 aa). Cysteine 227 and cysteine 409 are joined by a disulfide.

In terms of assembly, homotetramer; disulfide-linked. Dimer of dimers, giving rise to a V-shaped homotretramer. Isoform 1 and isoform 3 interact with RTN4R. Identified in a complex with RTN4R and LINGO1. Peripherally associated with AMPAR complex. AMPAR complex consists of an inner core made of 4 pore-forming GluA/GRIA proteins (GRIA1, GRIA2, GRIA3 and GRIA4) and 4 major auxiliary subunits arranged in a twofold symmetry. One of the two pairs of distinct binding sites is occupied either by CNIH2, CNIH3 or CACNG2, CACNG3. The other harbors CACNG2, CACNG3, CACNG4, CACNG8 or GSG1L. This inner core of AMPAR complex is complemented by outer core constituents binding directly to the GluA/GRIA proteins at sites distinct from the interaction sites of the inner core constituents. Outer core constituents include at least PRRT1, PRRT2, CKAMP44/SHISA9, FRRS1L and NRN1. The proteins of the inner and outer core serve as a platform for other, more peripherally associated AMPAR constituents, including OLFM1. Alone or in combination, these auxiliary subunits control the gating and pharmacology of the AMPAR complex and profoundly impact their biogenesis and protein processing. Interacts with OLFM2. In isoform 3 and isoform 4, the signal peptide is predicted to end in position 17. Expressed in the brain (at protein level). Expressed in the brain, predominantly in the cortex and hippocampus. In the pituitary only the two A-type and in the adrenal glands only the two B-type forms were detected.

It is found in the secreted. The protein resides in the synapse. The protein localises to the endoplasmic reticulum. It localises to the cell projection. Its subcellular location is the axon. It is found in the perikaryon. Its function is as follows. Contributes to the regulation of axonal growth in the embryonic and adult central nervous system by inhibiting interactions between RTN4R and LINGO1. Inhibits RTN4R-mediated axon growth cone collapse. May play an important role in regulating the production of neural crest cells by the neural tube. May be required for normal responses to olfactory stimuli. The protein is Noelin (Olfm1) of Rattus norvegicus (Rat).